Consider the following 360-residue polypeptide: Diacylglycerol O-acyltransferase 3 (360 aa).

The interval 153–182 (KAKAMKKMTEMDSESSSSSESSDSDCDKGK) is disordered. [2Fe-2S] cluster contacts are provided by Cys-265, Cys-270, Cys-298, and Cys-302.

Belongs to the diacylglycerol acyltransferase family. Requires [2Fe-2S] cluster as cofactor.

It carries out the reaction an acyl-CoA + a 1,2-diacyl-sn-glycerol = a triacyl-sn-glycerol + CoA. It functions in the pathway glycerolipid metabolism; triacylglycerol biosynthesis. Involved in triacylglycerol (TAG) biosynthesis. Catalyzes the acylation of the sn-3 hydroxy group of sn-1,2-diacylglycerol using acyl-CoA. May preferentially use linolenoyl-CoA as substrate and to a lesser extent linoleoyl-CoA. May contribute to the active recycling of linoleate and linolenate into TAG when seed oil breakdown is blocked. This Arabidopsis thaliana (Mouse-ear cress) protein is Diacylglycerol O-acyltransferase 3.